We begin with the raw amino-acid sequence, 315 residues long: Homoserine kinase (315 aa).

97–107 (PPARGLGSSAT) provides a ligand contact to ATP.

The protein belongs to the GHMP kinase family. Homoserine kinase subfamily.

Its subcellular location is the cytoplasm. It catalyses the reaction L-homoserine + ATP = O-phospho-L-homoserine + ADP + H(+). The protein operates within amino-acid biosynthesis; L-threonine biosynthesis; L-threonine from L-aspartate: step 4/5. In terms of biological role, catalyzes the ATP-dependent phosphorylation of L-homoserine to L-homoserine phosphate. This Synechococcus sp. (strain CC9311) protein is Homoserine kinase.